Here is a 132-residue protein sequence, read N- to C-terminus: Insulin-like 3 (132 aa).

Residues 1–21 form the signal peptide; sequence MDRRPLTWALVLLGPALAIAL. Gln27 carries the pyrrolidone carboxylic acid modification. 3 disulfide bridges follow: Cys34/Cys117, Cys46/Cys130, and Cys116/Cys121. Residues 67 to 104 constitute a propeptide, c peptide like; the sequence is LLRWLEGQHLLHGLMASGDPVLVLAPQPLPQASRHHHH.

This sequence belongs to the insulin family. In terms of assembly, heterodimer of a B chain and an A chain linked by two disulfide bonds. 20% of B chains include an extra N-terminal pentapeptide. In terms of tissue distribution, expressed exclusively in Leydig cells of the testis.

It localises to the secreted. Its function is as follows. Seems to play a role in testicular function. May be a trophic hormone with a role in testicular descent in fetal life. Is a ligand for LGR8 receptor. This Bos taurus (Bovine) protein is Insulin-like 3 (INSL3).